A 156-amino-acid chain; its full sequence is Transcription antitermination protein NusB (156 aa).

It belongs to the NusB family.

Functionally, involved in transcription antitermination. Required for transcription of ribosomal RNA (rRNA) genes. Binds specifically to the boxA antiterminator sequence of the ribosomal RNA (rrn) operons. This chain is Transcription antitermination protein NusB, found in Rickettsia conorii (strain ATCC VR-613 / Malish 7).